Consider the following 458-residue polypeptide: MELPLGRCDDSRTWDDDSDPESETDPDAQAKAYVARVLSPPKSGLAFSRPSQLSTPAASPSASEPRAASRVSAVSEPGLLSLPPELLLEICSYLDARLVLHVLSRVCHALRDLVSDHVTWRLRALRRVRAPYPVVEEKNFDWPAACIALEQHLSRWAEDGRWVEYFCLAEGHVASVDSVLLLQGGSLCLSGSRDRNVNLWDLRQLGTESNQVLIKTLGTKRNSTHEGWVWSLAAQDHRVCSGSWDSTVKLWDMAADGQQFGEIKASSAVLCLSYLPDILVTGTYDKKVTIYDPRAGPALLKHQQLHSRPVLTLLADDRHIISGSEDHTLVVVDRRANSVLQRLQLDSYLLCMSYQEPQLWAGDNQGLLHVFANRNGCFQLIRSFDVGHSFPITGIQYSVGALYTTSTDKTIRVHVPTDPPRTICTRRHDNGLNRVCAEGNLVVAGSGDLSLEVWRLQA.

Methionine 1 is modified (N-acetylmethionine). Disordered stretches follow at residues 1 to 30 (MELP…DAQA) and 42 to 64 (KSGL…SASE). Residues 16-26 (DDSDPESETDP) show a composition bias toward acidic residues. At serine 18 the chain carries Phosphoserine. Threonine 55 carries the post-translational modification Phosphothreonine. At serine 59 the chain carries Phosphoserine. One can recognise an F-box domain in the interval 76–123 (EPGLLSLPPELLLEICSYLDARLVLHVLSRVCHALRDLVSDHVTWRLR). 7 WD repeats span residues 171-210 (GHVA…TESN), 220-261 (KRNS…QQFG), 264-301 (KASS…ALLK), 305-342 (LHSR…VLQR), 344-381 (QLDS…FQLI), 387-424 (GHSF…RTIC), and 427-458 (RHDN…RLQA).

In terms of assembly, interacts with SKP1 and CUL1.

Its function is as follows. Substrate-recognition component of the SCF (SKP1-CUL1-F-box protein)-type E3 ubiquitin ligase complex. In Homo sapiens (Human), this protein is F-box/WD repeat-containing protein 9 (FBXW9).